A 359-amino-acid chain; its full sequence is Ferredoxin--NADP reductase (359 aa).

FAD contacts are provided by Asp-48, Gln-56, Tyr-61, Ala-101, Phe-139, Asp-304, and Ser-345. Positions 340–359 (VHTHTSNDTNLQSRLHAAAE) are disordered. Polar residues predominate over residues 341 to 352 (HTHTSNDTNLQS).

This sequence belongs to the ferredoxin--NADP reductase type 2 family. As to quaternary structure, homodimer. Requires FAD as cofactor.

The catalysed reaction is 2 reduced [2Fe-2S]-[ferredoxin] + NADP(+) + H(+) = 2 oxidized [2Fe-2S]-[ferredoxin] + NADPH. This chain is Ferredoxin--NADP reductase, found in Ralstonia nicotianae (strain ATCC BAA-1114 / GMI1000) (Ralstonia solanacearum).